Here is a 79-residue protein sequence, read N- to C-terminus: Large ribosomal subunit protein uL24 (79 aa).

Residues 1–29 (MPKLKKLLLKVSTSKPNTNPPSQNEEKGT) are disordered. Over residues 11–23 (VSTSKPNTNPPSQ) the composition is skewed to polar residues.

It belongs to the universal ribosomal protein uL24 family. As to quaternary structure, part of the 50S ribosomal subunit.

In terms of biological role, one of two assembly initiator proteins, it binds directly to the 5'-end of the 23S rRNA, where it nucleates assembly of the 50S subunit. One of the proteins that surrounds the polypeptide exit tunnel on the outside of the subunit. The polypeptide is Large ribosomal subunit protein uL24 (rplX) (Onion yellows phytoplasma (strain OY-M)).